A 208-amino-acid polypeptide reads, in one-letter code: Thymidylate kinase (208 aa).

9-16 is an ATP binding site; the sequence is GGEGCGKS.

The protein belongs to the thymidylate kinase family.

The catalysed reaction is dTMP + ATP = dTDP + ADP. In terms of biological role, phosphorylation of dTMP to form dTDP in both de novo and salvage pathways of dTTP synthesis. The protein is Thymidylate kinase of Dehalococcoides mccartyi (strain CBDB1).